A 1256-amino-acid chain; its full sequence is GPI inositol-deacylase (1256 aa).

Residues 37-48 (DVYANSTTNATA) show a composition bias toward polar residues. The segment at 37–203 (DVYANSTTNA…MEKEEEQKFV (167 aa)) is disordered. Residues Asn-41 and Asn-45 are each glycosylated (N-linked (GlcNAc...) asparagine). The span at 59–68 (PRPSRPSQSS) shows a compositional bias: low complexity. Over residues 69 to 83 (AAERTSPESPSVRQS) the composition is skewed to polar residues. A compositionally biased stretch (low complexity) spans 107-135 (QSPSQQSQNQQQQQQQQQQQQQQQQQQQS). A compositionally biased stretch (polar residues) spans 143 to 156 (SGNFNWKLSHSRNG). Asn-155 is a glycosylation site (N-linked (GlcNAc...) asparagine). Low complexity predominate over residues 165-180 (FFSSSFSHSPSTPPLS). The span at 190 to 202 (HSKEMEKEEEQKF) shows a compositional bias: basic and acidic residues. Residues 214 to 234 (AITFVTLLISILGIGFLALVL) form a helical membrane-spanning segment. A glycan (N-linked (GlcNAc...) asparagine) is linked at Asn-235. The active site involves Ser-397. N-linked (GlcNAc...) asparagine glycosylation occurs at Asn-582. 2 helical membrane-spanning segments follow: residues 882–902 (LYMR…TLVL) and 929–949 (SIPL…NSSS). A glycan (N-linked (GlcNAc...) asparagine) is linked at Asn-960. The next 6 helical transmembrane spans lie at 980-1000 (PFFW…CTVF), 1005-1025 (LTLV…PGWI), 1053-1073 (ILLV…VCCL), 1103-1123 (SILL…VVWI), 1130-1150 (WLTP…IILV), and 1172-1192 (VLLF…AYML). Residues Asn-1212, Asn-1239, and Asn-1242 are each glycosylated (N-linked (GlcNAc...) asparagine).

It belongs to the GPI inositol-deacylase family.

The protein resides in the endoplasmic reticulum membrane. Involved in inositol deacylation of GPI-anchored proteins which plays important roles in the quality control and ER-associated degradation of GPI-anchored proteins. This chain is GPI inositol-deacylase (bst-1), found in Neurospora crassa (strain ATCC 24698 / 74-OR23-1A / CBS 708.71 / DSM 1257 / FGSC 987).